Here is a 346-residue protein sequence, read N- to C-terminus: Small ribosomal subunit biogenesis GTPase RsgA (346 aa).

The interval 1 to 25 (MAKRKLTQNQTRRIQSNNAKTLHRH) is disordered. Positions 7-20 (TQNQTRRIQSNNAK) are enriched in polar residues. The CP-type G domain maps to 103-271 (ENEISRPDYY…LIDSPGIREF (169 aa)). Residues 159 to 162 (NKVD) and 213 to 221 (GQSGVGKSS) contribute to the GTP site. Residues cysteine 295, cysteine 300, histidine 302, and cysteine 308 each contribute to the Zn(2+) site.

This sequence belongs to the TRAFAC class YlqF/YawG GTPase family. RsgA subfamily. As to quaternary structure, monomer. Associates with 30S ribosomal subunit, binds 16S rRNA. It depends on Zn(2+) as a cofactor.

It localises to the cytoplasm. Its function is as follows. One of several proteins that assist in the late maturation steps of the functional core of the 30S ribosomal subunit. Helps release RbfA from mature subunits. May play a role in the assembly of ribosomal proteins into the subunit. Circularly permuted GTPase that catalyzes slow GTP hydrolysis, GTPase activity is stimulated by the 30S ribosomal subunit. The chain is Small ribosomal subunit biogenesis GTPase RsgA from Haemophilus influenzae (strain ATCC 51907 / DSM 11121 / KW20 / Rd).